The following is a 599-amino-acid chain: NADH-quinone oxidoreductase subunit C/D (599 aa).

Residues 1–189 (MTELMTQNSA…DPFVLTKQKE (189 aa)) are NADH dehydrogenase I subunit C. Positions 213-599 (DFMFLNLGPN…IDFVMSDVDR (387 aa)) are NADH dehydrogenase I subunit D.

It in the N-terminal section; belongs to the complex I 30 kDa subunit family. This sequence in the C-terminal section; belongs to the complex I 49 kDa subunit family. In terms of assembly, NDH-1 is composed of 13 different subunits. Subunits NuoB, CD, E, F, and G constitute the peripheral sector of the complex.

It is found in the cell inner membrane. It carries out the reaction a quinone + NADH + 5 H(+)(in) = a quinol + NAD(+) + 4 H(+)(out). Functionally, NDH-1 shuttles electrons from NADH, via FMN and iron-sulfur (Fe-S) centers, to quinones in the respiratory chain. The immediate electron acceptor for the enzyme in this species is believed to be ubiquinone. Couples the redox reaction to proton translocation (for every two electrons transferred, four hydrogen ions are translocated across the cytoplasmic membrane), and thus conserves the redox energy in a proton gradient. This Sodalis glossinidius (strain morsitans) protein is NADH-quinone oxidoreductase subunit C/D.